Reading from the N-terminus, the 646-residue chain is Anoctamin-10 (646 aa).

8 helical membrane-spanning segments follow: residues 210-230 (LYFG…LIGI), 241-261 (DKYV…LEVW), 314-334 (IYLV…YVMM), 357-377 (VLLF…NLLY), 404-424 (VLVF…FVMQ), 502-522 (FLLF…AVLV), 557-577 (LAFE…IALS), and 592-612 (ILTV…LAFV).

It belongs to the anoctamin family.

The protein localises to the membrane. Does not exhibit calcium-activated chloride channel (CaCC) activity. Can inhibit the activity of ANO1. This Danio rerio (Zebrafish) protein is Anoctamin-10 (ano10).